We begin with the raw amino-acid sequence, 140 residues long: 3-hydroxyacyl-[acyl-carrier-protein] dehydratase FabZ (140 aa).

His47 is an active-site residue.

Belongs to the thioester dehydratase family. FabZ subfamily.

It localises to the cytoplasm. It carries out the reaction a (3R)-hydroxyacyl-[ACP] = a (2E)-enoyl-[ACP] + H2O. In terms of biological role, involved in unsaturated fatty acids biosynthesis. Catalyzes the dehydration of short chain beta-hydroxyacyl-ACPs and long chain saturated and unsaturated beta-hydroxyacyl-ACPs. The polypeptide is 3-hydroxyacyl-[acyl-carrier-protein] dehydratase FabZ (Streptococcus sanguinis (strain SK36)).